Consider the following 241-residue polypeptide: Phycocyanobilin:ferredoxin oxidoreductase (241 aa).

Belongs to the HY2 family.

It catalyses the reaction (2R,3Z)-phycocyanobilin + 4 oxidized [2Fe-2S]-[ferredoxin] = biliverdin IXalpha + 4 reduced [2Fe-2S]-[ferredoxin] + 4 H(+). Its function is as follows. Catalyzes the four-electron reduction of biliverdin IX-alpha (2-electron reduction at both the A and D rings); the reaction proceeds via an isolatable 2-electron intermediate, 181,182-dihydrobiliverdin. The protein is Phycocyanobilin:ferredoxin oxidoreductase of Prochlorococcus marinus (strain MIT 9515).